A 474-amino-acid polypeptide reads, in one-letter code: Cytochrome c-552 (474 aa).

The first 29 residues, 1-29 (MSIKHWMASSVSVTALVMTALLNITAVSA), serve as a signal peptide directing secretion. Residue His-91 participates in heme c binding. Positions 119, 122, and 123 each coordinate heme. Cys-157, Cys-160, His-161, Cys-206, Cys-209, and His-210 together coordinate heme c. Glu-212, Tyr-213, Lys-258, and Gln-260 together coordinate Ca(2+). Tyr-213 provides a ligand contact to substrate. His-261 is a binding site for substrate. Positions 272, 279, 282, 283, 298, 311, 314, 315, and 390 each coordinate heme c.

This sequence belongs to the cytochrome c-552 family. Requires Ca(2+) as cofactor. It depends on heme c as a cofactor.

Its subcellular location is the periplasm. It catalyses the reaction 6 Fe(III)-[cytochrome c] + NH4(+) + 2 H2O = 6 Fe(II)-[cytochrome c] + nitrite + 8 H(+). Its pathway is nitrogen metabolism; nitrate reduction (assimilation). Catalyzes the reduction of nitrite to ammonia, consuming six electrons in the process. The protein is Cytochrome c-552 of Vibrio vulnificus (strain CMCP6).